The chain runs to 397 residues: 4-hydroxyphenylpyruvate dioxygenase (397 aa).

VOC domains lie at Asn18–Tyr149 and Phe181–Lys339. Fe cation contacts are provided by His184, His267, and Glu350.

It belongs to the 4HPPD family. In terms of assembly, homodimer. Fe cation is required as a cofactor.

The protein resides in the cytoplasm. Its subcellular location is the endoplasmic reticulum membrane. It is found in the golgi apparatus membrane. The catalysed reaction is 3-(4-hydroxyphenyl)pyruvate + O2 = homogentisate + CO2. The protein operates within amino-acid degradation; L-phenylalanine degradation; acetoacetate and fumarate from L-phenylalanine: step 3/6. Its function is as follows. Catalyzes the conversion of 4-hydroxyphenylpyruvic acid to homogentisic acid, one of the steps in tyrosine catabolism. This is 4-hydroxyphenylpyruvate dioxygenase (hpd) from Danio rerio (Zebrafish).